A 971-amino-acid chain; its full sequence is MASNNVAQFAAELKMPAGVLLEQLQAAGVQKASEDDALSETDKARLLDHLRKSHGATDGDKRKITLTRKHTSEIKQSDATGKARTIQVEVRKKRTFVKRDDVAEGADQGQAQVAEADDDAELKRREEEARREAELLEKQAQELRERQERLEREEAERRAREEAAEAERRRAEEEAATKRAAAEAAAAQQQAAAQQAAAEQEATPTQSAQDEARAAAERAAQREAAKKAEDAAREAADKARAEQEEISKRRAAAEAEARAIREMMNTPRKAVVKAVEPPKPVEPPKPAEAKGTLHKPAKPEGAQARPAVKKPAGAAAPATTQAPAGAGDRNKKPGAGKGGWQDDAAKRRGIKTRGDSSGGVDRGWRGGPKGRGRHQDSSTFQAPTEPIVREVHVPETVSVADLAHKMSIKASEVIKVMMKMGQMVTINQVLDQETAMIIVEELGHRAVAAKLDDPEALLVEGESGTDAEQLPRPPVVTVMGHVDHGKTSLLDHIRRAKVAAGEAGGITQHIGAYHVDTPRGVITFLDTPGHEAFTAMRARGAKATDIVVLVVAADDGVMPQTKEAIAHAKAGGVPIVVAINKIDKPEANPDRVKQELVAEGVVPEEYGGDSPFVPVSAKTGAGIDDLLENVLLQAEVLELKAPVEAPAKGIVIEAKLDKGKGPVATILVQSGTLNRGDIVLAGTAYGRVRAMLDENGKPTKEAGPSIPVEIQGLSEVPGAGEEVIVLPDERKAREIALFRQGKFRDVKLAKQQAAKLESMLEQMGEGEVQNLPLIIKADVQGSQEALVQSLLKLSTDEVRVQIVHSAVGGISENDVNLATASKAVIIGFNTRADAQARKLAEANGIDIRYYNIIYDAVDEVKAAMSGMLAPEKREVITGMVEVRQVFKVPKIGTVAGCMVTDGIVKRSSSVRVLRNNVVIFTGELESLKRFKDDVKEVKQGFECGMSVKNFNDVTEGDQFEVFEVTEVARTL.

Residues 48 to 63 are compositionally biased toward basic and acidic residues; sequence DHLRKSHGATDGDKRK. 2 disordered regions span residues 48 to 86 and 101 to 381; these read DHLR…ARTI and DVAE…STFQ. Residues 105 to 114 are compositionally biased toward low complexity; the sequence is GADQGQAQVA. The segment covering 121–181 has biased composition (basic and acidic residues); sequence ELKRREEEAR…EEEAATKRAA (61 aa). The span at 182 to 203 shows a compositional bias: low complexity; it reads AEAAAAQQQAAAQQAAAEQEAT. Basic and acidic residues predominate over residues 210–261; sequence DEARAAAERAAQREAAKKAEDAAREAADKARAEQEEISKRRAAAEAEARAIR. The segment covering 277–286 has biased composition (pro residues); the sequence is PPKPVEPPKP. A compositionally biased stretch (low complexity) spans 304 to 326; that stretch reads ARPAVKKPAGAAAPATTQAPAGA. Residues 356–369 are compositionally biased toward gly residues; the sequence is SSGGVDRGWRGGPK. The region spanning 471 to 640 is the tr-type G domain; it reads PRPPVVTVMG…LLQAEVLELK (170 aa). The segment at 480 to 487 is G1; that stretch reads GHVDHGKT. Residue 480–487 coordinates GTP; the sequence is GHVDHGKT. A G2 region spans residues 505 to 509; the sequence is GITQH. The G3 stretch occupies residues 526–529; sequence DTPG. GTP-binding positions include 526–530 and 580–583; these read DTPGH and NKID. Positions 580–583 are G4; the sequence is NKID. The G5 stretch occupies residues 616-618; the sequence is SAK.

Belongs to the TRAFAC class translation factor GTPase superfamily. Classic translation factor GTPase family. IF-2 subfamily.

It localises to the cytoplasm. In terms of biological role, one of the essential components for the initiation of protein synthesis. Protects formylmethionyl-tRNA from spontaneous hydrolysis and promotes its binding to the 30S ribosomal subunits. Also involved in the hydrolysis of GTP during the formation of the 70S ribosomal complex. The protein is Translation initiation factor IF-2 of Burkholderia orbicola (strain MC0-3).